The primary structure comprises 469 residues: UDP-N-acetylmuramate--L-alanine ligase (469 aa).

112 to 118 (GTHGKTT) provides a ligand contact to ATP.

The protein belongs to the MurCDEF family.

The protein localises to the cytoplasm. The catalysed reaction is UDP-N-acetyl-alpha-D-muramate + L-alanine + ATP = UDP-N-acetyl-alpha-D-muramoyl-L-alanine + ADP + phosphate + H(+). Its pathway is cell wall biogenesis; peptidoglycan biosynthesis. Functionally, cell wall formation. The chain is UDP-N-acetylmuramate--L-alanine ligase from Leptothrix cholodnii (strain ATCC 51168 / LMG 8142 / SP-6) (Leptothrix discophora (strain SP-6)).